Reading from the N-terminus, the 375-residue chain is Probable RNA 3'-terminal phosphate cyclase-like protein (375 aa).

This sequence belongs to the RNA 3'-terminal cyclase family. Type 2 subfamily.

The protein resides in the nucleus. It is found in the nucleolus. Does not have cyclase activity. Plays a role in 40S-ribosomal-subunit biogenesis in the early pre-rRNA processing steps at sites A0, A1 and A2 that are required for proper maturation of the 18S RNA. The polypeptide is Probable RNA 3'-terminal phosphate cyclase-like protein (Arabidopsis thaliana (Mouse-ear cress)).